A 271-amino-acid chain; its full sequence is Acetyl-coenzyme A carboxylase carboxyl transferase subunit alpha (271 aa).

In terms of domain architecture, CoA carboxyltransferase C-terminal spans 1 to 247; sequence MSRELIRTVD…KKTILEALGE (247 aa).

This sequence belongs to the AccA family. As to quaternary structure, acetyl-CoA carboxylase is a heterohexamer composed of biotin carboxyl carrier protein (AccB), biotin carboxylase (AccC) and two subunits each of ACCase subunit alpha (AccA) and ACCase subunit beta (AccD).

The protein resides in the cytoplasm. It carries out the reaction N(6)-carboxybiotinyl-L-lysyl-[protein] + acetyl-CoA = N(6)-biotinyl-L-lysyl-[protein] + malonyl-CoA. It participates in lipid metabolism; malonyl-CoA biosynthesis; malonyl-CoA from acetyl-CoA: step 1/1. Functionally, component of the acetyl coenzyme A carboxylase (ACC) complex. First, biotin carboxylase catalyzes the carboxylation of biotin on its carrier protein (BCCP) and then the CO(2) group is transferred by the carboxyltransferase to acetyl-CoA to form malonyl-CoA. The polypeptide is Acetyl-coenzyme A carboxylase carboxyl transferase subunit alpha (Clostridium perfringens (strain SM101 / Type A)).